A 266-amino-acid chain; its full sequence is Tryptophan synthase alpha chain (266 aa).

Catalysis depends on proton acceptor residues Glu-47 and Asp-58.

Belongs to the TrpA family. In terms of assembly, tetramer of two alpha and two beta chains.

It carries out the reaction (1S,2R)-1-C-(indol-3-yl)glycerol 3-phosphate + L-serine = D-glyceraldehyde 3-phosphate + L-tryptophan + H2O. It functions in the pathway amino-acid biosynthesis; L-tryptophan biosynthesis; L-tryptophan from chorismate: step 5/5. In terms of biological role, the alpha subunit is responsible for the aldol cleavage of indoleglycerol phosphate to indole and glyceraldehyde 3-phosphate. The protein is Tryptophan synthase alpha chain of Leptospira biflexa serovar Patoc (strain Patoc 1 / Ames).